Consider the following 250-residue polypeptide: Purine nucleoside phosphorylase BQ2027_MB2173C (250 aa).

Zn(2+) contacts are provided by His77, Cys114, and His131.

Belongs to the purine nucleoside phosphorylase YfiH/LACC1 family. Homodimer. It depends on Cu(2+) as a cofactor. Requires Zn(2+) as cofactor.

The catalysed reaction is adenosine + phosphate = alpha-D-ribose 1-phosphate + adenine. The enzyme catalyses S-methyl-5'-thioadenosine + phosphate = 5-(methylsulfanyl)-alpha-D-ribose 1-phosphate + adenine. It catalyses the reaction inosine + phosphate = alpha-D-ribose 1-phosphate + hypoxanthine. It carries out the reaction adenosine + H2O + H(+) = inosine + NH4(+). In terms of biological role, purine nucleoside enzyme that catalyzes the phosphorolysis of adenosine and inosine nucleosides, yielding D-ribose 1-phosphate and the respective free bases, adenine and hypoxanthine. Also catalyzes the phosphorolysis of S-methyl-5'-thioadenosine into adenine and S-methyl-5-thio-alpha-D-ribose 1-phosphate. Also has adenosine deaminase activity. The protein is Purine nucleoside phosphorylase BQ2027_MB2173C of Mycobacterium bovis (strain ATCC BAA-935 / AF2122/97).